Reading from the N-terminus, the 319-residue chain is Ribonuclease Z (319 aa).

Residues His-62, His-64, Asp-66, His-67, His-145, Asp-216, and His-274 each coordinate Zn(2+). The active-site Proton acceptor is the Asp-66.

Belongs to the RNase Z family. Homodimer. Zn(2+) is required as a cofactor.

It catalyses the reaction Endonucleolytic cleavage of RNA, removing extra 3' nucleotides from tRNA precursor, generating 3' termini of tRNAs. A 3'-hydroxy group is left at the tRNA terminus and a 5'-phosphoryl group is left at the trailer molecule.. Zinc phosphodiesterase, which displays some tRNA 3'-processing endonuclease activity. Probably involved in tRNA maturation, by removing a 3'-trailer from precursor tRNA. This chain is Ribonuclease Z, found in Synechococcus sp. (strain CC9902).